The chain runs to 594 residues: Parathyroid hormone/parathyroid hormone-related peptide receptor (594 aa).

The signal sequence occupies residues M1–A28. Residues D29–L188 lie on the Extracellular side of the membrane. Disulfide bonds link C48-C117, C108-C149, and C132-C171. Residues D66–R102 are disordered. N-linked (GlcNAc...) asparagine glycosylation is found at N152, N162, N167, and N177. A helical transmembrane segment spans residues G189–I209. Residues L210 to I223 are Cytoplasmic-facing. A helical membrane pass occupies residues H224 to V244. Residues L245–T295 are Extracellular-facing. The chain crosses the membrane as a helical span at residues N296–F316. Over S317 to K319 the chain is Cytoplasmic. The helical transmembrane segment at K320–W340 threads the bilayer. At V341–K361 the chain is on the extracellular side. Residues W362–I382 traverse the membrane as a helical segment. Residues V383–R405 lie on the Cytoplasmic side of the membrane. A helical transmembrane segment spans residues K406–M426. Residues A427–V440 lie on the Extracellular side of the membrane. The helical transmembrane segment at Q441–C461 threads the bilayer. At F462 to M594 the chain is on the cytoplasmic side. Positions W475 to W478 match the Important for interaction with G proteins motif. Residues P525–M594 are disordered. Positions T543 to A558 are enriched in low complexity. Phosphothreonine is present on T552.

Belongs to the G-protein coupled receptor 2 family. In terms of assembly, homodimer in the absence of bound ligand. Peptide hormone binding leads to dissociation of the homodimer. Post-translationally, N-glycosylated.

The protein resides in the cell membrane. Functionally, G-protein-coupled receptor for parathyroid hormone (PTH) and for parathyroid hormone-related peptide (PTHLH). Ligand binding causes a conformation change that triggers signaling via guanine nucleotide-binding proteins (G proteins) and modulates the activity of downstream effectors, such as adenylate cyclase (cAMP). PTH1R is coupled to G(s) G alpha proteins and mediates activation of adenylate cyclase activity. PTHLH dissociates from PTH1R more rapidly than PTH; as consequence, the cAMP response induced by PTHLH decays faster than the response induced by PTH. The sequence is that of Parathyroid hormone/parathyroid hormone-related peptide receptor (PTH1R) from Pongo abelii (Sumatran orangutan).